A 91-amino-acid polypeptide reads, in one-letter code: Putative antitoxin YutD (91 aa).

The cysteines at positions 77 and 81 are disulfide-linked.

As to quaternary structure, homodimer, probably forms a complex with cognate toxin YutE.

Its function is as follows. Probable antitoxin component of a putative type VII toxin-antitoxin (TA) system. Probably neutralizes cognate toxin YutE. The protein is Putative antitoxin YutD (yutD) of Bacillus subtilis (strain 168).